Reading from the N-terminus, the 382-residue chain is Opsin-VA (382 aa).

At 1–35 (MELFPVAVNGVSHAEDPFSGPLTFIAPWNYKVLAT) the chain is on the extracellular side. The chain crosses the membrane as a helical span at residues 36-56 (LMFVVTAASLSENFAVMLVTF). The Cytoplasmic segment spans residues 57–67 (RFTQLRKPLNY). A helical transmembrane segment spans residues 68–88 (IIVNLSLADFLVSLTGGTISF). Over 89 to 103 (LTNYHGYFFLGKWAC) the chain is Extracellular. C103 and C180 are joined by a disulfide. Residues 104-124 (VLEGFAVTYFGIVALWSLAVL) traverse the membrane as a helical segment. Residues 125–147 (AFERFFVICRPLGNIRLRGKHAA) are Cytoplasmic-facing. A helical transmembrane segment spans residues 148–168 (LGLLFVWTFSFIWTIPPVLGW). Topologically, residues 169 to 193 (SSYTVSKIGTTCEPNWYSGNFHDHT) are extracellular. The helical transmembrane segment at 194 to 214 (FIIAFFITCFILPLGVIVVCY) threads the bilayer. Residues 215 to 244 (CKLIKKLRKVSNTHGRLGNARKPERQVTRM) lie on the Cytoplasmic side of the membrane. The helical transmembrane segment at 245 to 265 (VVVMIVAFMVAWTPYAAFSIV) threads the bilayer. At 266-279 (VTAHPSIHLDPRLA) the chain is on the extracellular side. A helical transmembrane segment spans residues 280 to 300 (AAPAFFSKTAAVYNPVIYVFM). Position 287 is an N6-(retinylidene)lysine (K287). The Cytoplasmic segment spans residues 301 to 382 (NKQFRKCLVQ…PIPENKVCPM (82 aa)). The span at 330 to 346 (RQGMTNESHTGEMSTIA) shows a compositional bias: polar residues. Residues 330–371 (RQGMTNESHTGEMSTIASRIPKDGSIPEKTQEHPGERRSLAH) are disordered. Residues 349–368 (IPKDGSIPEKTQEHPGERRS) are compositionally biased toward basic and acidic residues.

This sequence belongs to the G-protein coupled receptor 1 family. Opsin subfamily. In terms of tissue distribution, expressed in a subset of retinal horizontal cells as well as in retinal ganglion cells.

Its subcellular location is the membrane. This is Opsin-VA from Rutilus rutilus (Roach).